We begin with the raw amino-acid sequence, 150 residues long: Large ribosomal subunit protein bL9 (150 aa).

This sequence belongs to the bacterial ribosomal protein bL9 family.

Binds to the 23S rRNA. The polypeptide is Large ribosomal subunit protein bL9 (Polaromonas naphthalenivorans (strain CJ2)).